The following is a 452-amino-acid chain: Bifunctional protein GlmU (452 aa).

A pyrophosphorylase region spans residues 1–232; it reads MTSRTSLTIV…EDEVRGINTK (232 aa). UDP-N-acetyl-alpha-D-glucosamine is bound by residues 11-14, Lys25, Gln78, and 83-84; these read LAAG and GT. Asp108 contacts Mg(2+). Gly144, Glu158, Asn173, and Asn230 together coordinate UDP-N-acetyl-alpha-D-glucosamine. A Mg(2+)-binding site is contributed by Asn230. A linker region spans residues 233-253; the sequence is AQLAEAEAVMQARLRQAALDA. The segment at 254–452 is N-acetyltransferase; sequence GVTMIAPETV…KTRGKTRPAK (199 aa). Residues Arg319 and Lys337 each contribute to the UDP-N-acetyl-alpha-D-glucosamine site. The Proton acceptor role is filled by His349. UDP-N-acetyl-alpha-D-glucosamine-binding residues include Tyr352 and Asn363. Acetyl-CoA-binding positions include Ala366, 372–373, Ser391, Ser409, and Arg426; that span reads NY.

The protein in the N-terminal section; belongs to the N-acetylglucosamine-1-phosphate uridyltransferase family. In the C-terminal section; belongs to the transferase hexapeptide repeat family. Homotrimer. It depends on Mg(2+) as a cofactor.

It is found in the cytoplasm. The catalysed reaction is alpha-D-glucosamine 1-phosphate + acetyl-CoA = N-acetyl-alpha-D-glucosamine 1-phosphate + CoA + H(+). It carries out the reaction N-acetyl-alpha-D-glucosamine 1-phosphate + UTP + H(+) = UDP-N-acetyl-alpha-D-glucosamine + diphosphate. Its pathway is nucleotide-sugar biosynthesis; UDP-N-acetyl-alpha-D-glucosamine biosynthesis; N-acetyl-alpha-D-glucosamine 1-phosphate from alpha-D-glucosamine 6-phosphate (route II): step 2/2. It functions in the pathway nucleotide-sugar biosynthesis; UDP-N-acetyl-alpha-D-glucosamine biosynthesis; UDP-N-acetyl-alpha-D-glucosamine from N-acetyl-alpha-D-glucosamine 1-phosphate: step 1/1. The protein operates within bacterial outer membrane biogenesis; LPS lipid A biosynthesis. Functionally, catalyzes the last two sequential reactions in the de novo biosynthetic pathway for UDP-N-acetylglucosamine (UDP-GlcNAc). The C-terminal domain catalyzes the transfer of acetyl group from acetyl coenzyme A to glucosamine-1-phosphate (GlcN-1-P) to produce N-acetylglucosamine-1-phosphate (GlcNAc-1-P), which is converted into UDP-GlcNAc by the transfer of uridine 5-monophosphate (from uridine 5-triphosphate), a reaction catalyzed by the N-terminal domain. The protein is Bifunctional protein GlmU of Rhodopseudomonas palustris (strain BisA53).